Reading from the N-terminus, the 240-residue chain is Mitochondrial transcription rescue factor 1 (240 aa).

The transit peptide at 1–83 (MAVPGVRLLT…ECYFPFSIRL (83 aa)) directs the protein to the mitochondrion. The tract at residues 92–127 (STKKTLQKEADEEDSDEETSYPERSEQEEELESEPG) is disordered. The segment covering 101–124 (ADEEDSDEETSYPERSEQEEELES) has biased composition (acidic residues). Phosphoserine occurs at positions 106 and 116. Positions 142 to 217 (FRYDVILKTG…LKKVYEEKTE (76 aa)) constitute an S4 RNA-binding domain.

As to quaternary structure, monomer. Interacts with POLRMT. Interacts (via S4 domain) with MTRFR (via C-terminus). Associates with mitoribosomal S39 large subunit, peptidyl tRNA and nascent chain.

Its subcellular location is the mitochondrion matrix. In terms of biological role, mitochondrial RNA-binding protein involved in mitochondrial transcription regulation. Functions as a protective factor to maintain proper mitochondrial RNA level during stress. Acts at the transcription level and its protective function depends on its RNA binding ability. Part of a mitoribosome-associated quality control pathway that prevents aberrant translation by responding to interruptions during elongation. As heterodimer with MTRF, ejects the unfinished nascent chain and peptidyl transfer RNA (tRNA), respectively, from stalled ribosomes. Recruitment of mitoribosome biogenesis factors to these quality control intermediates suggests additional roles for MTRES1 and MTRF during mitoribosome rescue. This chain is Mitochondrial transcription rescue factor 1 (Mtres1), found in Mus musculus (Mouse).